The following is a 105-amino-acid chain: Pyrimidine/purine nucleoside phosphorylase (105 aa).

It belongs to the nucleoside phosphorylase PpnP family.

It catalyses the reaction a purine D-ribonucleoside + phosphate = a purine nucleobase + alpha-D-ribose 1-phosphate. The catalysed reaction is adenosine + phosphate = alpha-D-ribose 1-phosphate + adenine. It carries out the reaction cytidine + phosphate = cytosine + alpha-D-ribose 1-phosphate. The enzyme catalyses guanosine + phosphate = alpha-D-ribose 1-phosphate + guanine. It catalyses the reaction inosine + phosphate = alpha-D-ribose 1-phosphate + hypoxanthine. The catalysed reaction is thymidine + phosphate = 2-deoxy-alpha-D-ribose 1-phosphate + thymine. It carries out the reaction uridine + phosphate = alpha-D-ribose 1-phosphate + uracil. The enzyme catalyses xanthosine + phosphate = alpha-D-ribose 1-phosphate + xanthine. Its function is as follows. Catalyzes the phosphorolysis of diverse nucleosides, yielding D-ribose 1-phosphate and the respective free bases. Can use uridine, adenosine, guanosine, cytidine, thymidine, inosine and xanthosine as substrates. Also catalyzes the reverse reactions. The protein is Pyrimidine/purine nucleoside phosphorylase of Clostridioides difficile (strain 630) (Peptoclostridium difficile).